A 62-amino-acid polypeptide reads, in one-letter code: uncharacterized protein (62 aa).

A disordered region spans residues 17–62 (YNNYNNNNNNNNNNNNNNNNNNNNNNNNNNNNNNNNNNNNNNKNNN).

This is an uncharacterized protein from Dictyostelium discoideum (Social amoeba).